A 226-amino-acid polypeptide reads, in one-letter code: UPF0758 protein PSEEN5431 (226 aa).

The region spanning 102-224 (VMDNPLAVRR…PLSMIEHGWL (123 aa)) is the MPN domain. The Zn(2+) site is built by His-173, His-175, and Asp-186. The short motif at 173–186 (HNHPSGNCEPSQDD) is the JAMM motif element.

The protein belongs to the UPF0758 family.

This Pseudomonas entomophila (strain L48) protein is UPF0758 protein PSEEN5431.